We begin with the raw amino-acid sequence, 706 residues long: Zinc finger CCCH domain-containing protein 56 (706 aa).

ANK repeat units follow at residues 83 to 113 and 118 to 150; these read EQRTPLMVASLYGSLDVVKFILSFPEAELNL and DKSTALHCAASGASVNSLDVVKLLLSVGADPNI. Over residues 211 to 221 the composition is skewed to low complexity; that stretch reads SSLLSLDSVSS. Positions 211-235 are disordered; sequence SSLLSLDSVSSPTKPHGTDVTFASE. C3H1-type zinc fingers lie at residues 302–324 and 332–356; these read PCPDFKKGSCKQGDMCEYAHGVF and QYRTRLCKDGMGCNRRVCFFAHANE. Disordered regions lie at residues 396–427, 545–616, and 652–692; these read PSAAQHSFTPPISPSGNGSMPHSSMGWPQQNI, SPKN…QTHG, and QMLK…TRES. 2 stretches are compositionally biased toward polar residues: residues 397 to 427 and 545 to 560; these read SAAQHSFTPPISPSGNGSMPHSSMGWPQQNI and SPKNVEQHSLLQQASS. Position 568 is a phosphoserine (Ser568). Positions 580-592 are enriched in low complexity; the sequence is SRSLSSRDFGSSL. 3 stretches are compositionally biased toward polar residues: residues 600–616, 652–667, and 677–686; these read DSGSPLSPWSSWDQTHG, QMLKDSSSPRNGNRVV, and QGGSSVNPHN.

The protein is Zinc finger CCCH domain-containing protein 56 of Arabidopsis thaliana (Mouse-ear cress).